Here is a 408-residue protein sequence, read N- to C-terminus: Dual-specificity RNA methyltransferase RlmN (408 aa).

Residue glutamate 120 is the Proton acceptor of the active site. The 250-residue stretch at 126 to 375 folds into the Radical SAM core domain; it reads EEGRGTLCIS…IRTPRGRDIL (250 aa). Cysteine 133 and cysteine 378 form a disulfide bridge. 3 residues coordinate [4Fe-4S] cluster: cysteine 140, cysteine 144, and cysteine 147. S-adenosyl-L-methionine contacts are provided by residues 204 to 205, serine 236, 258 to 260, and asparagine 335; these read GE and SLH. Residue cysteine 378 is the S-methylcysteine intermediate of the active site.

The protein belongs to the radical SAM superfamily. RlmN family. [4Fe-4S] cluster is required as a cofactor.

The protein localises to the cytoplasm. It carries out the reaction adenosine(2503) in 23S rRNA + 2 reduced [2Fe-2S]-[ferredoxin] + 2 S-adenosyl-L-methionine = 2-methyladenosine(2503) in 23S rRNA + 5'-deoxyadenosine + L-methionine + 2 oxidized [2Fe-2S]-[ferredoxin] + S-adenosyl-L-homocysteine. The enzyme catalyses adenosine(37) in tRNA + 2 reduced [2Fe-2S]-[ferredoxin] + 2 S-adenosyl-L-methionine = 2-methyladenosine(37) in tRNA + 5'-deoxyadenosine + L-methionine + 2 oxidized [2Fe-2S]-[ferredoxin] + S-adenosyl-L-homocysteine. Functionally, specifically methylates position 2 of adenine 2503 in 23S rRNA and position 2 of adenine 37 in tRNAs. m2A2503 modification seems to play a crucial role in the proofreading step occurring at the peptidyl transferase center and thus would serve to optimize ribosomal fidelity. The polypeptide is Dual-specificity RNA methyltransferase RlmN (Rhizobium johnstonii (strain DSM 114642 / LMG 32736 / 3841) (Rhizobium leguminosarum bv. viciae)).